The primary structure comprises 948 residues: UvrABC system protein A (948 aa).

An ATP-binding site is contributed by 42 to 49 (GLSGSGKS). The C4-type zinc-finger motif lies at 262 to 289 (CPVCSYSLPELEPRLFSFNNPMGSCPTC). ABC transporter domains follow at residues 319 to 596 (WDKR…ENSV) and 616 to 945 (VNPG…KYLK). Position 649 to 656 (649 to 656 (GVSGSGKS)) interacts with ATP. The segment at 748-774 (CEACQGDGVIKVEMHFLPDVYVPCEVC) adopts a C4-type zinc-finger fold.

It belongs to the ABC transporter superfamily. UvrA family. Forms a heterotetramer with UvrB during the search for lesions.

It localises to the cytoplasm. Its function is as follows. The UvrABC repair system catalyzes the recognition and processing of DNA lesions. UvrA is an ATPase and a DNA-binding protein. A damage recognition complex composed of 2 UvrA and 2 UvrB subunits scans DNA for abnormalities. When the presence of a lesion has been verified by UvrB, the UvrA molecules dissociate. The polypeptide is UvrABC system protein A (Neisseria meningitidis serogroup A / serotype 4A (strain DSM 15465 / Z2491)).